Consider the following 471-residue polypeptide: 3-isopropylmalate dehydratase large subunit (471 aa).

The [4Fe-4S] cluster site is built by Cys347, Cys407, and Cys410.

This sequence belongs to the aconitase/IPM isomerase family. LeuC type 1 subfamily. In terms of assembly, heterodimer of LeuC and LeuD. It depends on [4Fe-4S] cluster as a cofactor.

The catalysed reaction is (2R,3S)-3-isopropylmalate = (2S)-2-isopropylmalate. It participates in amino-acid biosynthesis; L-leucine biosynthesis; L-leucine from 3-methyl-2-oxobutanoate: step 2/4. In terms of biological role, catalyzes the isomerization between 2-isopropylmalate and 3-isopropylmalate, via the formation of 2-isopropylmaleate. This is 3-isopropylmalate dehydratase large subunit from Edwardsiella ictaluri (strain 93-146).